We begin with the raw amino-acid sequence, 646 residues long: Threonine--tRNA ligase (646 aa).

Residues 1–61 (MIKITFPDGS…NEDANFVLYK (61 aa)) form the TGS domain. The segment at 242–541 (DHRKIGKEMD…LIEHTAGKFP (300 aa)) is catalytic. 3 residues coordinate Zn(2+): Cys-337, His-388, and His-518.

Belongs to the class-II aminoacyl-tRNA synthetase family. Homodimer. Zn(2+) serves as cofactor.

The protein localises to the cytoplasm. It carries out the reaction tRNA(Thr) + L-threonine + ATP = L-threonyl-tRNA(Thr) + AMP + diphosphate + H(+). Its function is as follows. Catalyzes the attachment of threonine to tRNA(Thr) in a two-step reaction: L-threonine is first activated by ATP to form Thr-AMP and then transferred to the acceptor end of tRNA(Thr). Also edits incorrectly charged L-seryl-tRNA(Thr). In Phocaeicola vulgatus (strain ATCC 8482 / DSM 1447 / JCM 5826 / CCUG 4940 / NBRC 14291 / NCTC 11154) (Bacteroides vulgatus), this protein is Threonine--tRNA ligase.